A 415-amino-acid chain; its full sequence is Plasminogen activator inhibitor 2 (415 aa).

A disulfide bridge links Cys5 with Cys405. Residues Asn75, Asn115, and Asn339 are each glycosylated (N-linked (GlcNAc...) asparagine).

It belongs to the serpin family. Ov-serpin subfamily. In terms of assembly, interacts with PSMB1. The signal sequence is not cleaved.

It is found in the cytoplasm. The protein resides in the secreted. Its subcellular location is the extracellular space. In terms of biological role, inhibits urokinase-type plasminogen activator. The monocyte derived PAI-2 is distinct from the endothelial cell-derived PAI-1. The polypeptide is Plasminogen activator inhibitor 2 (SERPINB2) (Homo sapiens (Human)).